Reading from the N-terminus, the 360-residue chain is Phenylalanine--tRNA ligase alpha subunit (360 aa).

E260 lines the Mg(2+) pocket.

This sequence belongs to the class-II aminoacyl-tRNA synthetase family. Phe-tRNA synthetase alpha subunit type 1 subfamily. As to quaternary structure, tetramer of two alpha and two beta subunits. The cofactor is Mg(2+).

The protein localises to the cytoplasm. It catalyses the reaction tRNA(Phe) + L-phenylalanine + ATP = L-phenylalanyl-tRNA(Phe) + AMP + diphosphate + H(+). The sequence is that of Phenylalanine--tRNA ligase alpha subunit from Agrobacterium fabrum (strain C58 / ATCC 33970) (Agrobacterium tumefaciens (strain C58)).